A 253-amino-acid chain; its full sequence is Ubiquinone biosynthesis O-methyltransferase (253 aa).

Residues Arg-47, Gly-78, Asp-99, and Met-141 each contribute to the S-adenosyl-L-methionine site.

It belongs to the methyltransferase superfamily. UbiG/COQ3 family.

It carries out the reaction a 3-demethylubiquinol + S-adenosyl-L-methionine = a ubiquinol + S-adenosyl-L-homocysteine + H(+). The enzyme catalyses a 3-(all-trans-polyprenyl)benzene-1,2-diol + S-adenosyl-L-methionine = a 2-methoxy-6-(all-trans-polyprenyl)phenol + S-adenosyl-L-homocysteine + H(+). Its pathway is cofactor biosynthesis; ubiquinone biosynthesis. Functionally, O-methyltransferase that catalyzes the 2 O-methylation steps in the ubiquinone biosynthetic pathway. This chain is Ubiquinone biosynthesis O-methyltransferase, found in Rhodopseudomonas palustris (strain HaA2).